The sequence spans 277 residues: UBX domain-containing protein 10 (277 aa).

Residues 1–102 (MAIEAPVNFA…APDEMPELLL (102 aa)) are disordered. The segment covering 16 to 31 (TVVSTAGDSSTWQPSS) has biased composition (polar residues). The span at 35 to 50 (HVIRPKSAKGRKRPNL) shows a compositional bias: basic residues. A compositionally biased stretch (low complexity) spans 60-77 (SPSALSSSPPPRSSGSPS). Residue Ser88 is modified to Phosphoserine. A UBX domain is found at 191–268 (DEEPRLLLAV…GILHKSVLGI (78 aa)).

It belongs to the UBXN10 family. In terms of assembly, interacts with CLUAP1; the interaction is direct and mediates interaction with the intraflagellar transport complex B (IFT-B). Interacts with VCP; the interaction is direct.

The protein resides in the cell projection. The protein localises to the cilium. Its function is as follows. VCP/p97-binding protein required for ciliogenesis. Acts as a tethering factor that facilitates recruitment of VCP/p97 to the intraflagellar transport complex B (IFT-B) in cilia. UBX domain-containing proteins act as tethering factors for VCP/p97 and may specify substrate specificity of VCP/p97. This Mus musculus (Mouse) protein is UBX domain-containing protein 10.